We begin with the raw amino-acid sequence, 85 residues long: Mitochondrial protein pet191 homolog (85 aa).

Residues His18–Thr61 form the CHCH domain. The short motif at Cys21–Cys32 is the Cx10C motif element. 2 disulfides stabilise this stretch: Cys21/Cys53 and Cys32/Cys43. A Cx9C motif motif is present at residues Cys43–Cys53. Positions Arg65 to Gln85 are disordered.

Belongs to the PET191 family.

The protein resides in the mitochondrion. Its function is as follows. Involved in the assembly of cytochrome c oxidase. This chain is Mitochondrial protein pet191 homolog, found in Schizosaccharomyces pombe (strain 972 / ATCC 24843) (Fission yeast).